Consider the following 299-residue polypeptide: tRNA dimethylallyltransferase (299 aa).

10 to 17 (GATATGKS) provides a ligand contact to ATP. 12–17 (TATGKS) lines the substrate pocket. Residues 35 to 38 (DSRQ) are interaction with substrate tRNA.

Belongs to the IPP transferase family. As to quaternary structure, monomer. Mg(2+) serves as cofactor.

It catalyses the reaction adenosine(37) in tRNA + dimethylallyl diphosphate = N(6)-dimethylallyladenosine(37) in tRNA + diphosphate. Its function is as follows. Catalyzes the transfer of a dimethylallyl group onto the adenine at position 37 in tRNAs that read codons beginning with uridine, leading to the formation of N6-(dimethylallyl)adenosine (i(6)A). This is tRNA dimethylallyltransferase from Rippkaea orientalis (strain PCC 8801 / RF-1) (Cyanothece sp. (strain PCC 8801)).